A 1382-amino-acid polypeptide reads, in one-letter code: ABC-type transporter atr1 (1382 aa).

Positions 1 to 12 (MRFRSDSRADHQ) are enriched in basic and acidic residues. The tract at residues 1–56 (MRFRSDSRADHQHPKKQGSMDPDTIQALKYQDRSSSSSSNNKPKEKVGSASTSPSP) is disordered. Residue Asn62 is glycosylated (N-linked (GlcNAc...) asparagine). A run of 6 helical transmembrane segments spans residues 101–121 (LFGT…NIFI), 159–179 (LILL…MAVF), 233–253 (LPMA…AFAF), 259–279 (LVLL…GALT), 339–359 (GVGV…AFFY), and 374–394 (IVSV…LFSM). The ABC transmembrane type-1 1 domain occupies 101–400 (LFGTGMAIAA…LFSMIENFTM (300 aa)). A glycan (N-linked (GlcNAc...) asparagine) is linked at Asn397. The ABC transporter 1 domain maps to 445–688 (LKLDHVHFAY…PNGTFASMLR (244 aa)). 480 to 487 (GLSGSGKS) serves as a coordination point for ATP. The N-linked (GlcNAc...) asparagine glycan is linked to Asn680. A disordered region spans residues 738–768 (SVKPKDPSKNFEPPGESYASPAADGVKQDAP). In terms of domain architecture, ABC transmembrane type-1 2 spans 797 to 1094 (LGSLCAAIIG…IFNYSADFSS (298 aa)). A helical membrane pass occupies residues 800–820 (LCAAIIGAVYPVYAILFGTAI). Asn827 is a glycosylation site (N-linked (GlcNAc...) asparagine). The chain crosses the membrane as a helical span at residues 848–868 (ISSGSFFIVAVGCAFISFYHV). An N-linked (GlcNAc...) asparagine glycan is attached at Asn903. Helical transmembrane passes span 911-931 (SLSV…GSIV) and 951-973 (LALV…LRVL). N-linked (GlcNAc...) asparagine glycosylation occurs at Asn1020. 2 helical membrane passes run 1034–1054 (VLFG…FWYG) and 1067–1087 (GFFT…NIFN). Positions 1136–1377 (IALKEVTFRY…DGLFALMARL (242 aa)) constitute an ABC transporter 2 domain. 1171-1178 (GGSGSGKS) provides a ligand contact to ATP. The N-linked (GlcNAc...) asparagine glycan is linked to Asn1324.

The protein belongs to the ABC transporter superfamily. ABCB family. Multidrug resistance exporter (TC 3.A.1.201) subfamily.

Its subcellular location is the cell membrane. ABC-type transporter; part of the gene cluster that mediates the biosynthesis of the glycolipid biosurfactant ustilagic acid (UA). UA is a secreted cellobiose glycolipid that is toxic for many microorganisms and confers biocontrol activity to U.maydis. Export of UA is presumably catalyzed by the ABC transporter atr1. Atr1 appears to be quite unspecific, as many of the UA derivatives produced by cluster mutant strains are readily exported. This Mycosarcoma maydis (Corn smut fungus) protein is ABC-type transporter atr1.